Consider the following 267-residue polypeptide: uncharacterized protein (267 aa).

Positions 1 to 55 (MTEERKETFEEEINQSERIDADEEPLSRMSRKASRQSKQKQKQKQKPRQERGEST) are disordered. A compositionally biased stretch (acidic residues) spans 9–24 (FEEEINQSERIDADEE). Basic residues predominate over residues 29-46 (MSRKASRQSKQKQKQKQK). A run of 5 helical transmembrane segments spans residues 93–115 (YKYG…WFQL), 135–157 (GFLV…IWAV), 173–195 (AVLG…FAIV), 199–221 (MLTV…LYVQ), and 234–256 (YIYC…WPFI).

The protein localises to the cell membrane. This is an uncharacterized protein from Bacillus subtilis (strain 168).